Consider the following 357-residue polypeptide: Ribosomal RNA large subunit methyltransferase M (357 aa).

S-adenosyl-L-methionine is bound by residues serine 183, 216–219, aspartate 235, aspartate 255, and aspartate 271; that span reads APGG. Residue lysine 300 is the Proton acceptor of the active site.

It belongs to the class I-like SAM-binding methyltransferase superfamily. RNA methyltransferase RlmE family. RlmM subfamily. Monomer.

The protein resides in the cytoplasm. The catalysed reaction is cytidine(2498) in 23S rRNA + S-adenosyl-L-methionine = 2'-O-methylcytidine(2498) in 23S rRNA + S-adenosyl-L-homocysteine + H(+). Functionally, catalyzes the 2'-O-methylation at nucleotide C2498 in 23S rRNA. This is Ribosomal RNA large subunit methyltransferase M from Pseudomonas syringae pv. syringae (strain B728a).